The following is a 188-amino-acid chain: dCTP deaminase (188 aa).

109-114 (KSTYAR) contacts dCTP. Glutamate 135 serves as the catalytic Proton donor/acceptor. DCTP is bound by residues glutamine 154, tyrosine 168, and glutamine 178.

Belongs to the dCTP deaminase family. In terms of assembly, homotrimer.

It carries out the reaction dCTP + H2O + H(+) = dUTP + NH4(+). It participates in pyrimidine metabolism; dUMP biosynthesis; dUMP from dCTP (dUTP route): step 1/2. Catalyzes the deamination of dCTP to dUTP. This is dCTP deaminase from Helicobacter acinonychis (strain Sheeba).